Reading from the N-terminus, the 418-residue chain is MLHPRARTMLLLSLPAVAIGIASSLILIVVMKIASVLQNLLWLRLPGTLGIAQDSPFWIIAILTLTGIAVGLVIRFSQGHAGPDPACEPLIGAPVPPSALPGLIVALILGLAGGVSLGPEHPIMTVNIALAVAIGARLLPRVNRMEWTILASAGTIGALFGTPVAAALIFSQTLNGSSEVPLWDRLFAPLMAAAAGALTTGLFFHPHFSLPIAHYGQMEMTDILSGAIVAAIAIAAGMVAVWCLPRLHAMMHQIKNPVLMLGVGGFILGILGVIAGPVSLFKGLDEMQQMVANQAFSTSDYFLLAVIKLAALVVAAASGFRGGRIFPAVFVGVALGLMLHEHVPAVPAAITVSCAILGIVLVVTRDGWLSLFMAAVVVPNTTLLPLLCIVMLPAWLLLAGKPMMMVNRPKQQPPHDNV.

Helical transmembrane passes span 10 to 30 (LLLSLPAVAIGIASSLILIVV), 54 to 74 (DSPFWIIAILTLTGIAVGLVI), 99 to 119 (ALPGLIVALILGLAGGVSLGP), 120 to 140 (EHPIMTVNIALAVAIGARLLP), 149 to 169 (ILASAGTIGALFGTPVAAALI), 186 to 206 (LFAPLMAAAAGALTTGLFFHP), 223 to 243 (ILSGAIVAAIAIAAGMVAVWC), 258 to 278 (VLMLGVGGFILGILGVIAGPV), 300 to 320 (DYFLLAVIKLAALVVAAASGF), 322 to 342 (GGRIFPAVFVGVALGLMLHEH), 343 to 363 (VPAVPAAITVSCAILGIVLVV), and 371 to 391 (LFMAAVVVPNTTLLPLLCIVM).

The protein belongs to the chloride channel (TC 2.A.49) family.

The protein localises to the cell membrane. The polypeptide is Putative ion-transport protein YfeO (Escherichia coli (strain SMS-3-5 / SECEC)).